The chain runs to 517 residues: Crotonobetaine/carnitine--CoA ligase (517 aa).

It belongs to the ATP-dependent AMP-binding enzyme family.

The enzyme catalyses 4-(trimethylamino)butanoate + ATP + CoA = 4-(trimethylamino)butanoyl-CoA + AMP + diphosphate. The catalysed reaction is crotonobetaine + ATP + CoA = crotonobetainyl-CoA + AMP + diphosphate. It catalyses the reaction (R)-carnitine + ATP + CoA = (R)-carnitinyl-CoA + AMP + diphosphate. It functions in the pathway amine and polyamine metabolism; carnitine metabolism. Its function is as follows. Catalyzes the transfer of CoA to carnitine, generating the initial carnitinyl-CoA needed for the CaiB reaction cycle. Also has activity toward crotonobetaine and gamma-butyrobetaine. The protein is Crotonobetaine/carnitine--CoA ligase of Escherichia coli O9:H4 (strain HS).